Consider the following 682-residue polypeptide: Potassium-transporting ATPase ATP-binding subunit (682 aa).

4 helical membrane passes run 34 to 54 (PVMF…IAMA), 62 to 82 (ALFS…ANFA), 219 to 239 (IALT…TATL), and 254 to 274 (VLVA…LSAI). Catalysis depends on Asp-307, which acts as the 4-aspartylphosphate intermediate. Residues Asp-344, Glu-348, 377–384 (FTAQSRMS), and Lys-395 each bind ATP. Mg(2+) is bound by residues Asp-518 and Asp-522. Transmembrane regions (helical) follow at residues 588–608 (FAII…LNIM), 616–636 (AILS…PLAL), and 656–676 (IYGL…DLLL).

It belongs to the cation transport ATPase (P-type) (TC 3.A.3) family. Type IA subfamily. In terms of assembly, the system is composed of three essential subunits: KdpA, KdpB and KdpC.

The protein localises to the cell inner membrane. It carries out the reaction K(+)(out) + ATP + H2O = K(+)(in) + ADP + phosphate + H(+). Its function is as follows. Part of the high-affinity ATP-driven potassium transport (or Kdp) system, which catalyzes the hydrolysis of ATP coupled with the electrogenic transport of potassium into the cytoplasm. This subunit is responsible for energy coupling to the transport system and for the release of the potassium ions to the cytoplasm. This chain is Potassium-transporting ATPase ATP-binding subunit, found in Escherichia fergusonii (strain ATCC 35469 / DSM 13698 / CCUG 18766 / IAM 14443 / JCM 21226 / LMG 7866 / NBRC 102419 / NCTC 12128 / CDC 0568-73).